A 439-amino-acid chain; its full sequence is MLSKLASLQTVAALRRGLRTSVASATSVATKKTEQGPPSSEYIFERESKYGAHNYHPLPVALERGKGIYMWDVEGRQYFDFLSAYGAVSQGHCHPKIIEAMKSQVDKLTLTSRAFYNNVLGEYEEYITKLFNYNKVLPMNTGVEAGETACKLARRWGYTVKGIQKYKAKIVFAVGNFWGRTLSAVSSSTDPTSYDGFGPFMPGFETIPYNDLPALERALQDPNVAAFMVEPIQGEAGVIVPDPGYLTGVRELCTRHQVLFIADEIQTGLARTGRWLAVDHENVRPDIVLLGKALSGGLYPVSAVLCDDDIMLTIKPGEHGSTYGGNPLGCRIAIAALEVLEEEHLAENADKMGAILRKELMKLPSDVVTAVRGKGLLNAIVIRETKDCDAWKVCLRLRDNGLLAKPTHGDIIRLAPPLVIKEDEIRESVEIINKTILSF.

Residues Met-1–Gln-35 constitute a mitochondrion transit peptide. 2 positions are modified to N6-acetyllysine: Lys-49 and Lys-66. Lys-102 is modified (N6-succinyllysine). N6-acetyllysine; alternate is present on Lys-107. An N6-succinyllysine; alternate modification is found at Lys-107. Lys-292 bears the N6-(pyridoxal phosphate)lysine mark. At Lys-362 the chain carries N6-acetyllysine; alternate. Lys-362 bears the N6-succinyllysine; alternate mark. N6-acetyllysine is present on residues Lys-386 and Lys-392. At Lys-405 the chain carries N6-acetyllysine; alternate. N6-succinyllysine; alternate is present on Lys-405. N6-acetyllysine is present on Lys-421.

As to quaternary structure, homohexamer. Requires pyridoxal 5'-phosphate as cofactor. As to expression, expressed in the head and flagellum of epididymal sperm but not in testicular sperm (at protein level).

The protein resides in the mitochondrion matrix. The catalysed reaction is L-ornithine + 2-oxoglutarate = L-glutamate 5-semialdehyde + L-glutamate. It participates in amino-acid biosynthesis; L-proline biosynthesis; L-glutamate 5-semialdehyde from L-ornithine: step 1/1. Functionally, catalyzes the reversible interconversion of L-ornithine and 2-oxoglutarate to L-glutamate semialdehyde and L-glutamate. The polypeptide is Ornithine aminotransferase, mitochondrial (Oat) (Rattus norvegicus (Rat)).